We begin with the raw amino-acid sequence, 94 residues long: Protein RESPONSE TO LOW SULFUR 2 (94 aa).

A coiled-coil region spans residues 15-63 (VDELRRKNGEMEKAVEEMKKEMLQLWRRTQVAEEAEERLCSQLAELEAE).

Functionally, may be involved in defense responses monitoring. Probably implicated into osmotic stress signaling. The chain is Protein RESPONSE TO LOW SULFUR 2 from Arabidopsis thaliana (Mouse-ear cress).